A 700-amino-acid chain; its full sequence is ABC transporter B family member 26, chloroplastic (700 aa).

A chloroplast-targeting transit peptide spans 1 to 59 (MAQQVLGCTSRPIRVSLHRCSVITTSDTIRRKNLRFVRNPRLSFSLQSSTRNYRLPSIN). 3 consecutive transmembrane segments (helical) span residues 137 to 157 (WVIF…ITIP), 182 to 202 (LVTL…FFGI), and 268 to 288 (LIYL…ICCI). In terms of domain architecture, ABC transmembrane type-1 spans 139–421 (IFAAFSTLIV…VGDNLSSLMQ (283 aa)). Positions 455–694 (IEFVDVSFSY…DGLYARLTKR (240 aa)) constitute an ABC transporter domain. 490-497 (GLSGSGKS) lines the ATP pocket.

The protein belongs to the ABC transporter superfamily. ABCB family. Multidrug resistance exporter (TC 3.A.1.201) subfamily.

The protein resides in the plastid. The protein localises to the chloroplast membrane. The sequence is that of ABC transporter B family member 26, chloroplastic (ABCB26) from Arabidopsis thaliana (Mouse-ear cress).